The following is a 133-amino-acid chain: Small ribosomal subunit protein uS8 (133 aa).

This sequence belongs to the universal ribosomal protein uS8 family. As to quaternary structure, part of the 30S ribosomal subunit.

Functionally, one of the primary rRNA binding proteins, it binds directly to 16S rRNA central domain where it helps coordinate assembly of the platform of the 30S subunit. This chain is Small ribosomal subunit protein uS8, found in Saccharolobus islandicus (strain L.S.2.15 / Lassen #1) (Sulfolobus islandicus).